Reading from the N-terminus, the 536-residue chain is Austinoid biosynthesis cluster protein W (536 aa).

The first 19 residues, 1-19 (MKHPTVALLGVGMLGCAAA), serve as a signal peptide directing secretion. Disordered regions lie at residues 141–164 (GSAP…PGFP), 185–220 (SLPG…PGFS), 261–302 (FGVP…ASNG), 385–423 (PGSA…ASNG), and 491–536 (PSPT…SSAE). The span at 195 to 208 (SGPSQAAAAPSTGD) shows a compositional bias: low complexity. Over residues 209 to 220 (SGSGLPGSPGFS) the composition is skewed to gly residues. 2 stretches are compositionally biased toward low complexity: residues 287 to 302 (AGNA…ASNG) and 408 to 423 (AGNA…ASNG).

It participates in secondary metabolite biosynthesis; terpenoid biosynthesis. In terms of biological role, part of the gene cluster that mediates the biosynthesis of calidodehydroaustin, a fungal meroterpenoid. The first step of the pathway is the synthesis of 3,5-dimethylorsellinic acid by the polyketide synthase ausA. 3,5-dimethylorsellinic acid is then prenylated by the polyprenyl transferase ausN. Further epoxidation by the FAD-dependent monooxygenase ausM and cyclization by the probable terpene cyclase ausL lead to the formation of protoaustinoid A. Protoaustinoid A is then oxidized to spiro-lactone preaustinoid A3 by the combined action of the FAD-binding monooxygenases ausB and ausC, and the dioxygenase ausE. Acid-catalyzed keto-rearrangement and ring contraction of the tetraketide portion of preaustinoid A3 by ausJ lead to the formation of preaustinoid A4. The aldo-keto reductase ausK, with the help of ausH, is involved in the next step by transforming preaustinoid A4 into isoaustinone which is in turn hydroxylated by the P450 monooxygenase ausI to form austinolide. The cytochrome P450 monooxygenase ausG modifies austinolide to austinol. Austinol is further acetylated to austin by the O-acetyltransferase ausP, which spontaneously changes to dehydroaustin. The cytochrome P450 monooxygenase ausR then converts dehydroaustin is into 7-dehydrodehydroaustin. The hydroxylation catalyzed by ausR permits the O-acetyltransferase ausQ to add an additional acetyl group to the molecule, leading to the formation of acetoxydehydroaustin. The short chain dehydrogenase ausT catalyzes the reduction of the double bond present between carbon atoms 1 and 2 to convert 7-dehydrodehydroaustin into 1,2-dihydro-7-hydroxydehydroaustin. AusQ catalyzes not only an acetylation reaction but also the addition of the PKS ausV diketide product to 1,2-dihydro-7-hydroxydehydroaustin, forming precalidodehydroaustin. Finally, the iron/alpha-ketoglutarate-dependent dioxygenase converts precalidodehydroaustin into calidodehydroaustin. The chain is Austinoid biosynthesis cluster protein W from Aspergillus calidoustus.